We begin with the raw amino-acid sequence, 186 residues long: Crossover junction endodeoxyribonuclease RuvC (186 aa).

Active-site residues include Asp7, Glu67, and Asp140. The Mg(2+) site is built by Asp7, Glu67, and Asp140.

It belongs to the RuvC family. As to quaternary structure, homodimer which binds Holliday junction (HJ) DNA. The HJ becomes 2-fold symmetrical on binding to RuvC with unstacked arms; it has a different conformation from HJ DNA in complex with RuvA. In the full resolvosome a probable DNA-RuvA(4)-RuvB(12)-RuvC(2) complex forms which resolves the HJ. It depends on Mg(2+) as a cofactor.

It is found in the cytoplasm. The catalysed reaction is Endonucleolytic cleavage at a junction such as a reciprocal single-stranded crossover between two homologous DNA duplexes (Holliday junction).. Functionally, the RuvA-RuvB-RuvC complex processes Holliday junction (HJ) DNA during genetic recombination and DNA repair. Endonuclease that resolves HJ intermediates. Cleaves cruciform DNA by making single-stranded nicks across the HJ at symmetrical positions within the homologous arms, yielding a 5'-phosphate and a 3'-hydroxyl group; requires a central core of homology in the junction. The consensus cleavage sequence is 5'-(A/T)TT(C/G)-3'. Cleavage occurs on the 3'-side of the TT dinucleotide at the point of strand exchange. HJ branch migration catalyzed by RuvA-RuvB allows RuvC to scan DNA until it finds its consensus sequence, where it cleaves and resolves the cruciform DNA. This Chloroherpeton thalassium (strain ATCC 35110 / GB-78) protein is Crossover junction endodeoxyribonuclease RuvC.